Reading from the N-terminus, the 95-residue chain is Small ribosomal subunit protein mS37 (95 aa).

One can recognise a CHCH domain in the interval 27–69; it reads ANRCLVLMSNLLQCWSSNGHMNPVCEKLATDLKACTSQNVMGS. 2 consecutive short sequence motifs (cx9C motif) follow at residues 30–40 and 51–61; these read CLVLMSNLLQC and CEKLATDLKAC. 2 cysteine pairs are disulfide-bonded: C30/C61 and C40/C51.

This sequence belongs to the mitochondrion-specific ribosomal protein mS37 family. Component of the mitochondrial small ribosomal subunit.

Its subcellular location is the mitochondrion. Its function is as follows. Involved in mitochondrial genome encoded proteins translation. This is Small ribosomal subunit protein mS37 (MRP10) from Eremothecium gossypii (strain ATCC 10895 / CBS 109.51 / FGSC 9923 / NRRL Y-1056) (Yeast).